The primary structure comprises 585 residues: MAAVELEWIPETLYNTAISAVVDNYIRSRRDIRSLPENIQFDVYYKLYQQGRLCQLGSEFCELEVFAKVLRALDKRHLLHHCFQALMDHGVKVASVLAYSFSRRCSYIAESDAAVKEKAIQVGFVLGGFLSDAGWYSDAEKVFLSCLQLCTLHDEMLHWFRAVECCVRLLHVRNGNCKYHLGEETFKLAQTYMDKLSKHGQQANKAALYGELCALLFAKSHYDEAYKWCIEAMKEITAGLPVKVVVDVLRQASKACVVKREFKKAEQLIKHAVYLARDHFGSKHPKYSDTLLDYGFYLLNVDNICQSVAIYQAALDIRQSVFGGKNIHVATAHEDLAYSSYVHQYSSGKFDNALFHAERAIGIITHILPEDHLLLASSKRVKALILEEIAIDCHNKETEQRLLQEAHDLHLSSLQLAKKAFGEFNVQTAKHYGNLGRLYQSMRKFKEAEEMHIKAIQIKEQLLGQEDYEVALSVGHLASLYNYDMNQYENAEKLYLRSIAIGKKLFGEGYSGLEYDYRGLIKLYNSIGNYEKVFEYHNVLSNWNRLRDRQYSVTDALEDVSTSPQSTEEVVQSFLISQNVEGPSC.

TPR repeat units follow at residues Q50–F83, I120–H153, A206–G239, S288–V321, H333–I367, A429–L462, A471–L505, and E514–R547.

As to quaternary structure, component of a CRL2 E3 ubiquitin-protein ligase complex, also named ECS (Elongin BC-CUL2/5-SOCS-box protein) complex, composed of CUL2, Elongin BC (ELOB and ELOC), RBX1 and substrate-specific adapter APPBP2. Interacts with APP; APP interaction inhibits the E3 ubiquitin-protein ligase activity of the CRL2(APPBP2) complex. Rapidly degraded by the proteasome upon overexpression of a C-terminal fragment of APP.

It localises to the nucleus. It is found in the cytoplasm. The protein resides in the cytoskeleton. Its subcellular location is the membrane. It participates in protein modification; protein ubiquitination. Its activity is regulated as follows. E3 ubiquitin-protein ligase activity of the CRL2(APPBP2) complex is inhibited by APP. Substrate-recognition component of a Cul2-RING (CRL2) E3 ubiquitin-protein ligase complex of the DesCEND (destruction via C-end degrons) pathway, which recognizes a C-degron located at the extreme C terminus of target proteins, leading to their ubiquitination and degradation. The C-degron recognized by the DesCEND pathway is usually a motif of less than ten residues and can be present in full-length proteins, truncated proteins or proteolytically cleaved forms. The CRL2(APPBP2) complex specifically recognizes proteins with a -Arg-Xaa-Xaa-Gly degron at the C-terminus, leading to their ubiquitination and degradation. The CRL2(APPBP2) complex mediates ubiquitination and degradation of truncated SELENOV selenoproteins produced by failed UGA/Sec decoding, which end with a -Arg-Xaa-Xaa-Gly degron. May play a role in intracellular protein transport: may be involved in the translocation of APP along microtubules toward the cell surface. This chain is Amyloid protein-binding protein 2, found in Homo sapiens (Human).